The primary structure comprises 107 residues: MSITLSDSAAARVNSFLANRGKGFGLRLGVRTSGCSGMAYVLEFVDEPAAEDTVFEDKGVKVVIDGKSLQFLDGTQLDFVKEGLNEGFKFTNPNVKDECGCGESFNV.

Fe cation is bound by residues Cys-35, Cys-99, and Cys-101.

Belongs to the HesB/IscA family. In terms of assembly, homodimer; may form tetramers and higher multimers. Fe cation is required as a cofactor.

In terms of biological role, is able to transfer iron-sulfur clusters to apo-ferredoxin. Multiple cycles of [2Fe2S] cluster formation and transfer are observed, suggesting that IscA acts catalytically. Recruits intracellular free iron so as to provide iron for the assembly of transient iron-sulfur cluster in IscU in the presence of IscS, L-cysteine and the thioredoxin reductase system TrxA/TrxB. This Klebsiella pneumoniae (strain 342) protein is Iron-binding protein IscA.